The sequence spans 215 residues: Cytidylate kinase (215 aa).

11 to 19 is an ATP binding site; the sequence is GPTASGKGT.

Belongs to the cytidylate kinase family. Type 1 subfamily.

Its subcellular location is the cytoplasm. It catalyses the reaction CMP + ATP = CDP + ADP. The enzyme catalyses dCMP + ATP = dCDP + ADP. This Polynucleobacter necessarius subsp. necessarius (strain STIR1) protein is Cytidylate kinase.